The chain runs to 355 residues: Syntaxin-5 (355 aa).

The Cytoplasmic portion of the chain corresponds to 1 to 333 (MIPRKRYGSK…KYFQSVTSNR (333 aa)). Residues 28-37 (PATAGSSSSD) show a composition bias toward polar residues. The disordered stretch occupies residues 28–51 (PATAGSSSSDIAPLPPPVTLVPPP). Over residues 40-51 (PLPPPVTLVPPP) the composition is skewed to pro residues. The IxM motif; signal for cargo packaging into COPII-coated vesicles motif lies at 245 to 247 (IDM). In terms of domain architecture, t-SNARE coiled-coil homology spans 263–325 (DSYIQSRADT…EAAHSEILKY (63 aa)). Residues 287–318 (FQQLAHMVKEQEETIQRIDENVLGAQLDVEAA) are a coiled coil. The chain crosses the membrane as a helical; Anchor for type IV membrane protein span at residues 334–354 (WLMVKIFLILIVFFIIFVVFL). Ala-355 is a topological domain (vesicular).

It belongs to the syntaxin family. Part of a ternary complex containing STX5A, NSFL1C and VCP. Identified in a unique SNARE complex composed of the Golgi SNAREs GOSR1, GOSR2, YKT6 and VTI1A. Component of a SNARE complex consisting of STX5, YKT6, GOSR1 and BET1L. Interacts with BET1L. Interacts with BET1. Interacts with COG4. Interacts with GM130/GOLGA2. Interacts (via IxM motif) with SEC24C and SEC24D; mediates STX5 packaging into COPII-coated vesicles. Interacts with VLDLR; this interaction mediates VLDLR translocation from the endoplasmic reticulum to the plasma membrane.

The protein resides in the endoplasmic reticulum-Golgi intermediate compartment membrane. The protein localises to the golgi apparatus membrane. Mediates endoplasmic reticulum to Golgi transport. Together with p115/USO1 and GM130/GOLGA2, involved in vesicle tethering and fusion at the cis-Golgi membrane to maintain the stacked and inter-connected structure of the Golgi apparatus. Its function is as follows. Required for Golgi to endoplasmic reticulum retrogade transport, and for intra-Golgi transport. In terms of biological role, (Microbial infection) Required for the efficient production of infectious virion during human cytomegalovirus infection. Mechanistically, participates in the formation of the cytoplasmic viral assembly compartment where tegument acquisition and envelopment occur. The sequence is that of Syntaxin-5 (STX5) from Homo sapiens (Human).